A 288-amino-acid chain; its full sequence is 4-hydroxybenzoate octaprenyltransferase (288 aa).

The next 6 helical transmembrane spans lie at 20–40 (IGTL…AGGL), 43–63 (LKVF…GCII), 96–116 (LFVV…PLVV), 210–230 (QIIG…GMVA), 234–254 (AIYA…QKLI), and 262–282 (CFTA…ALML).

It belongs to the UbiA prenyltransferase family. Mg(2+) is required as a cofactor.

The protein localises to the cell inner membrane. It catalyses the reaction all-trans-octaprenyl diphosphate + 4-hydroxybenzoate = 4-hydroxy-3-(all-trans-octaprenyl)benzoate + diphosphate. Its pathway is cofactor biosynthesis; ubiquinone biosynthesis. In terms of biological role, catalyzes the prenylation of para-hydroxybenzoate (PHB) with an all-trans polyprenyl group. Mediates the second step in the final reaction sequence of ubiquinone-8 (UQ-8) biosynthesis, which is the condensation of the polyisoprenoid side chain with PHB, generating the first membrane-bound Q intermediate 3-octaprenyl-4-hydroxybenzoate. In Shewanella pealeana (strain ATCC 700345 / ANG-SQ1), this protein is 4-hydroxybenzoate octaprenyltransferase.